Consider the following 251-residue polypeptide: HTH-type transcriptional regulator UlaR (251 aa).

The 56-residue stretch at 3–58 (EAQRHQILLDMLAQLGFVTVENVIERLGISPATARRDINKLDESGKLKKVRNGAEA) folds into the HTH deoR-type domain. Positions 20 to 39 (VTVENVIERLGISPATARRD) form a DNA-binding region, H-T-H motif.

Its subcellular location is the cytoplasm. Functionally, represses ulaG and the ulaABCDEF operon. The polypeptide is HTH-type transcriptional regulator UlaR (Salmonella arizonae (strain ATCC BAA-731 / CDC346-86 / RSK2980)).